The primary structure comprises 309 residues: General transcription factor IIH subunit 3 (309 aa).

A C4-type zinc finger spans residues 269–286; that stretch reads CSVCLSIFCNFSPICTTC.

The protein belongs to the TFB4 family. In terms of assembly, part of a TFIID-containing RNA polymerase II pre-initiation complex that is composed of TBP and at least GTF2A1, GTF2A2, GTF2E1, GTF2E2, GTF2F1, GTF2H2, GTF2H3, GTF2H4, GTF2H5, GTF2B, TCEA1, ERCC2, ERCC3, TAF1, TAF2, TAF3, TAF4, TAF5, TAF6, TAF7, TAF8, TAF9, TAF10, TAF11, TAF12 and TAF13. Component of the 7-subunit TFIIH core complex composed of XPB/ERCC3, XPD/ERCC2, GTF2H1, GTF2H2, GTF2H3, GTF2H4 and GTF2H5, which is active in NER. The core complex associates with the 3-subunit CDK-activating kinase (CAK) module composed of CCNH/cyclin H, CDK7 and MNAT1 to form the 10-subunit holoenzyme (holo-TFIIH) active in transcription. Interacts with RARA; the interaction requires prior phosphorylation of RARA on 'Ser-369' which then enhances interaction of RARA with CDK7.

The protein resides in the nucleus. Its function is as follows. Component of the general transcription and DNA repair factor IIH (TFIIH) core complex, which is involved in general and transcription-coupled nucleotide excision repair (NER) of damaged DNA and, when complexed to CAK, in RNA transcription by RNA polymerase II. In NER, TFIIH acts by opening DNA around the lesion to allow the excision of the damaged oligonucleotide and its replacement by a new DNA fragment. In transcription, TFIIH has an essential role in transcription initiation. When the pre-initiation complex (PIC) has been established, TFIIH is required for promoter opening and promoter escape. Phosphorylation of the C-terminal tail (CTD) of the largest subunit of RNA polymerase II by the kinase module CAK controls the initiation of transcription. In Mus musculus (Mouse), this protein is General transcription factor IIH subunit 3 (Gtf2h3).